The following is a 1092-amino-acid chain: NAD-specific glutamate dehydrogenase (1092 aa).

Lysine 626 is an active-site residue.

The protein belongs to the Glu/Leu/Phe/Val dehydrogenases family. Homotetramer. Interacts with NNK1. Phosphorylated by a complex containing the NNK1 kinase.

It carries out the reaction L-glutamate + NAD(+) + H2O = 2-oxoglutarate + NH4(+) + NADH + H(+). Functionally, NAD(+)-dependent glutamate dehydrogenase which degrades glutamate to ammonia and alpha-ketoglutarate. The polypeptide is NAD-specific glutamate dehydrogenase (GDH2) (Saccharomyces cerevisiae (strain ATCC 204508 / S288c) (Baker's yeast)).